The sequence spans 241 residues: Small ribosomal subunit protein uS2 (241 aa).

This sequence belongs to the universal ribosomal protein uS2 family.

This chain is Small ribosomal subunit protein uS2, found in Enterobacter sp. (strain 638).